Here is a 447-residue protein sequence, read N- to C-terminus: Methylenetetrahydrofolate--tRNA-(uracil-5-)-methyltransferase TrmFO (447 aa).

9–14 (GGGLAG) provides a ligand contact to FAD.

It belongs to the MnmG family. TrmFO subfamily. FAD is required as a cofactor.

Its subcellular location is the cytoplasm. It carries out the reaction uridine(54) in tRNA + (6R)-5,10-methylene-5,6,7,8-tetrahydrofolate + NADH + H(+) = 5-methyluridine(54) in tRNA + (6S)-5,6,7,8-tetrahydrofolate + NAD(+). It catalyses the reaction uridine(54) in tRNA + (6R)-5,10-methylene-5,6,7,8-tetrahydrofolate + NADPH + H(+) = 5-methyluridine(54) in tRNA + (6S)-5,6,7,8-tetrahydrofolate + NADP(+). Functionally, catalyzes the folate-dependent formation of 5-methyl-uridine at position 54 (M-5-U54) in all tRNAs. This chain is Methylenetetrahydrofolate--tRNA-(uracil-5-)-methyltransferase TrmFO, found in Paramagnetospirillum magneticum (strain ATCC 700264 / AMB-1) (Magnetospirillum magneticum).